A 503-amino-acid polypeptide reads, in one-letter code: ATP synthase subunit alpha (503 aa).

Residue 169–176 (GDRKTGKT) participates in ATP binding.

The protein belongs to the ATPase alpha/beta chains family. As to quaternary structure, F-type ATPases have 2 components, CF(1) - the catalytic core - and CF(0) - the membrane proton channel. CF(1) has five subunits: alpha(3), beta(3), gamma(1), delta(1), epsilon(1). CF(0) has three main subunits: a(1), b(2) and c(9-12). The alpha and beta chains form an alternating ring which encloses part of the gamma chain. CF(1) is attached to CF(0) by a central stalk formed by the gamma and epsilon chains, while a peripheral stalk is formed by the delta and b chains.

The protein resides in the cell membrane. It catalyses the reaction ATP + H2O + 4 H(+)(in) = ADP + phosphate + 5 H(+)(out). In terms of biological role, produces ATP from ADP in the presence of a proton gradient across the membrane. The alpha chain is a regulatory subunit. The protein is ATP synthase subunit alpha of Lactobacillus delbrueckii subsp. bulgaricus (strain ATCC 11842 / DSM 20081 / BCRC 10696 / JCM 1002 / NBRC 13953 / NCIMB 11778 / NCTC 12712 / WDCM 00102 / Lb 14).